The primary structure comprises 253 residues: LexA repressor (253 aa).

The interval 1–33 is disordered; that stretch reads MTSQGRGTRRGGARGNVRAFPENPADAAGLTPR. The segment at residues 54-74 is a DNA-binding region (H-T-H motif); it reads VREIGEAVGLTSTSSVAHQLK. Residues S177 and K214 each act as for autocatalytic cleavage activity in the active site.

Belongs to the peptidase S24 family. In terms of assembly, homodimer.

The catalysed reaction is Hydrolysis of Ala-|-Gly bond in repressor LexA.. In terms of biological role, represses a number of genes involved in the response to DNA damage (SOS response), including recA and lexA. In the presence of single-stranded DNA, RecA interacts with LexA causing an autocatalytic cleavage which disrupts the DNA-binding part of LexA, leading to derepression of the SOS regulon and eventually DNA repair. The chain is LexA repressor from Frankia alni (strain DSM 45986 / CECT 9034 / ACN14a).